The chain runs to 551 residues: Tetrachloroethene reductive dehalogenase (551 aa).

The segment at residues 1–39 (MGEINRRNFLKVSILGAAAAAVASASAVKGMVSPLVADA) is a signal peptide (tat-type signal). Positions 411–440 (PRKFGVREFCRLCKKCADACPAQAISHEKD) constitute a 4Fe-4S ferredoxin-type 1 domain. [4Fe-4S] cluster contacts are provided by Cys420, Cys423, Cys426, Cys430, Cys467, Cys478, Cys481, and Cys485. The 19-residue stretch at 478 to 496 (CSNCVAVCSWNKVETWNHD) folds into the 4Fe-4S ferredoxin-type 2 domain.

Belongs to the PceA family. Requires [4Fe-4S] cluster as cofactor. Corrinoid is required as a cofactor. Post-translationally, predicted to be exported by the Tat system. The position of the signal peptide cleavage has not been experimentally proven.

The protein resides in the cell membrane. The catalysed reaction is trichloroethene + chloride + A + H(+) = tetrachloroethene + AH2. It catalyses the reaction trichloroethene + AH2 = (Z)-1,2-dichloroethene + chloride + A + H(+). Catalyzes the reductive dechlorination of tetrachloroethene (PCE) to trichloroethene (TCE) and of trichloroethene to cis-1,2-dichloroethene (DCE). This is Tetrachloroethene reductive dehalogenase from Desulfitobacterium hafniense (Desulfitobacterium frappieri).